A 455-amino-acid chain; its full sequence is Glycylpeptide N-tetradecanoyltransferase (455 aa).

38 to 41 is a tetradecanoyl-CoA binding site; it reads HKFW. A myristoyl CoA-binding region spans residues 168-204; it reads INFLCVHKQLRSKRLTPVLIKEITRRVNKCDIWHALY. Leu455 acts as the Proton acceptor; via carboxylate in catalysis.

Belongs to the NMT family. Monomer. The N-terminus is blocked.

The protein resides in the cytoplasm. The enzyme catalyses N-terminal glycyl-[protein] + tetradecanoyl-CoA = N-tetradecanoylglycyl-[protein] + CoA + H(+). Its activity is regulated as follows. Inhibited by diethylpyrocarbonate. Competitively inhibited by S-(2-oxo)pentadecyl-CoA, a non hydrolysable myristoyl-CoA analog, and by SC-58272, a peptidomimetic derived from the N-terminal sequence of a natural substrate. In terms of biological role, adds a myristoyl group to the N-terminal glycine residue of certain cellular proteins. Substrate specificity requires an N-terminal glycine in the nascent polypeptide substrates. Uncharged amino acids are preferred at position 2 while neutral residues are favored at positions 3 and 4. Ser is present at position 5 in almost all known N-myristoyl proteins and Lys is commonly encountered at postion 6. This Saccharomyces cerevisiae (strain ATCC 204508 / S288c) (Baker's yeast) protein is Glycylpeptide N-tetradecanoyltransferase (NMT1).